A 352-amino-acid chain; its full sequence is N-terminal EF-hand calcium-binding protein 1 (352 aa).

The residue at position 4 (serine 4) is a Phosphoserine. EF-hand domains lie at 26-61 (KGMS…GVLS) and 60-95 (LSGE…HLGE). 5 residues coordinate Ca(2+): aspartate 39, asparagine 41, aspartate 43, lysine 45, and glutamate 50. Residues 135 to 163 (LLKETLNQLQSLQNSLECAMETTEEQTRQ) are a coiled coil. The tract at residues 180–202 (GKRSSRRVQRHNSFSPNSPQFNV) is disordered. The span at 190 to 202 (HNSFSPNSPQFNV) shows a compositional bias: polar residues. A phosphoserine mark is found at serine 192 and serine 197. Residues 209–275 (EEDNQWMTQI…EEFQLALKHY (67 aa)) are a coiled coil. One can recognise an ABM domain in the interval 252 to 340 (MLVQRQMSVI…LETPELTSTM (89 aa)).

In terms of assembly, interacts with STX1. May interact with CPNE6.

The protein localises to the cytoplasm. This chain is N-terminal EF-hand calcium-binding protein 1 (NECAB1), found in Pongo abelii (Sumatran orangutan).